The primary structure comprises 236 residues: ATP synthase subunit 4, mitochondrial (236 aa).

A mitochondrion-targeting transit peptide spans 1 to 29 (MAFRALTTKAAARPLLALGPRSVAMGARY).

This sequence belongs to the eukaryotic ATPase subunit B family. F-type ATPases have 2 components, CF(1) - the catalytic core - and CF(0) - the membrane proton channel. In yeast, the dimeric form of ATP synthase consists of 17 polypeptides: alpha, beta, gamma, delta, epsilon, 4 (B), 5 (OSCP), 6 (A), 8, 9 (C), d, E (Tim11), f, g, h, i/j and k.

It is found in the mitochondrion. Its subcellular location is the mitochondrion inner membrane. Functionally, mitochondrial membrane ATP synthase (F(1)F(0) ATP synthase or Complex V) produces ATP from ADP in the presence of a proton gradient across the membrane which is generated by electron transport complexes of the respiratory chain. F-type ATPases consist of two structural domains, F(1) - containing the extramembraneous catalytic core, and F(0) - containing the membrane proton channel, linked together by a central stalk and a peripheral stalk. During catalysis, ATP synthesis in the catalytic domain of F(1) is coupled via a rotary mechanism of the central stalk subunits to proton translocation. Part of the complex F(0) domain and the peripheric stalk, which acts as a stator to hold the catalytic alpha(3)beta(3) subcomplex and subunit a/ATP6 static relative to the rotary elements. The sequence is that of ATP synthase subunit 4, mitochondrial (ATP4) from Eremothecium gossypii (strain ATCC 10895 / CBS 109.51 / FGSC 9923 / NRRL Y-1056) (Yeast).